Here is a 203-residue protein sequence, read N- to C-terminus: Cardiotrophin-2 (203 aa).

Positions 1 to 21 are cleaved as a signal peptide; it reads MSCSLARLCLLTLLSPPLSSA. Residue asparagine 43 is glycosylated (N-linked (GlcNAc...) asparagine).

The protein belongs to the IL-6 superfamily.

It localises to the secreted. In terms of biological role, may have an important role in neuronal precursor development and maturation. This Pan troglodytes (Chimpanzee) protein is Cardiotrophin-2 (CTF2).